The sequence spans 203 residues: Imidazoleglycerol-phosphate dehydratase (203 aa).

The protein belongs to the imidazoleglycerol-phosphate dehydratase family.

The protein resides in the cytoplasm. It catalyses the reaction D-erythro-1-(imidazol-4-yl)glycerol 3-phosphate = 3-(imidazol-4-yl)-2-oxopropyl phosphate + H2O. It participates in amino-acid biosynthesis; L-histidine biosynthesis; L-histidine from 5-phospho-alpha-D-ribose 1-diphosphate: step 6/9. The protein is Imidazoleglycerol-phosphate dehydratase of Deinococcus geothermalis (strain DSM 11300 / CIP 105573 / AG-3a).